Consider the following 271-residue polypeptide: Virulence regulon transcriptional activator VirF (271 aa).

Residues 167–265 (ERLQKFMEEN…GCTPSQARLT (99 aa)) enclose the HTH araC/xylS-type domain. 2 DNA-binding regions (H-T-H motif) span residues 184-205 (SKFAREFGMGLTTFKELFGTVY) and 232-255 (IVDIAMEAGFSSQSYFTQSYRRRF).

In terms of biological role, transcriptional activator of the Yersinia virulence regulon. This Yersinia enterocolitica protein is Virulence regulon transcriptional activator VirF (virF).